A 231-amino-acid chain; its full sequence is Verlamelin biosynthesis protein B (231 aa).

It participates in secondary metabolite biosynthesis. Functionally, part of the gene cluster that mediates the biosynthesis of verlamelin, a lipopeptide that exhibits antifungal activity against plant pathogenic fungi. Verlamelin is a cyclic hexadepsipeptide and is bridged by ester bonding between a 5-hydroxytetradecanoic acid moiety and a carboxyl group on the terminal Val of amide-bonded tetradecanoyl-hexapeptide D-allo-Thr-D-Ala-L-Pro-L-Gln-D-Tyr-L-Val. VlmA and vlmB are altogether regarded as essential components in the biosynthesis of 5-hydroxytetradecanoic acid. VlmA catalyzes the hydroxylation at position C5 of tetradecanoic acid produced in primary metabolism, while the precise function of vlmB still remains to be solved. To be loaded onto the waiting NRPS, 5-hydroxytetradecanoic acid is activated in the form of acyladenylate by the AMP-dependent ligase vlmC. VlmS seems to accept the fatty-acyl intermediate onto the initial module to further elongate amino acid residues by the downstream modules. In addition, in the last module at its C-terminus, vlmS contains a surplus condensation (C) domain that may be involved in cyclization, the last step to form verlamelin. This Lecanicillium sp protein is Verlamelin biosynthesis protein B.